The following is a 1420-amino-acid chain: Apolipoprotein(a) (1420 aa).

Positions Thr19–Pro30 are enriched in low complexity. A disordered region spans residues Thr19–Gly46. Kringle domains are found at residues Glu49 to Cys127, Glu163 to Cys241, Glu277 to Cys355, Glu391 to Cys469, and Glu505 to Cys583. Disulfide bonds link Cys50/Cys127, Cys71/Cys110, Cys99/Cys122, Cys164/Cys241, Cys185/Cys224, Cys213/Cys236, Cys278/Cys355, Cys299/Cys338, Cys327/Cys350, Cys392/Cys469, Cys413/Cys452, Cys441/Cys464, Cys506/Cys583, Cys527/Cys566, and Cys555/Cys578. The tract at residues Pro598–Val617 is disordered. Polar residues predominate over residues Pro600 to Glu616. Kringle domains lie at Asp619–Cys697, Asp725–Cys803, Asp839–Cys917, Asp953–Cys1031, and Gln1067–Cys1145. 19 cysteine pairs are disulfide-bonded: Cys620-Cys697, Cys641-Cys680, Cys669-Cys692, Cys726-Cys803, Cys747-Cys786, Cys775-Cys798, Cys840-Cys917, Cys861-Cys900, Cys889-Cys912, Cys954-Cys1031, Cys975-Cys1014, Cys1003-Cys1026, Cys1068-Cys1145, Cys1089-Cys1128, Cys1117-Cys1140, Cys1217-Cys1233, Cys1309-Cys1376, Cys1339-Cys1355, and Cys1366-Cys1394. The Peptidase S1 domain occupies Ile1191 to Arg1418.

It belongs to the peptidase S1 family. Plasminogen subfamily. In terms of assembly, disulfide-linked to apo-B100. Binds to fibronectin and decorin. N- and O-glycosylated.

Functionally, apo(a) is the main constituent of lipoprotein(a) (Lp(a)). It has serine proteinase activity and is able of autoproteolysis. Inhibits tissue-type plasminogen activator 1. Lp(a) may be a ligand for megalin/Gp 330. This is Apolipoprotein(a) (LPA) from Macaca mulatta (Rhesus macaque).